A 431-amino-acid chain; its full sequence is Enolase (431 aa).

Q163 is a (2R)-2-phosphoglycerate binding site. E205 functions as the Proton donor in the catalytic mechanism. Mg(2+) is bound by residues D242, E283, and D310. (2R)-2-phosphoglycerate is bound by residues K335, R364, S365, and K386. The Proton acceptor role is filled by K335.

This sequence belongs to the enolase family. Mg(2+) serves as cofactor.

It is found in the cytoplasm. It localises to the secreted. The protein localises to the cell surface. The catalysed reaction is (2R)-2-phosphoglycerate = phosphoenolpyruvate + H2O. Its pathway is carbohydrate degradation; glycolysis; pyruvate from D-glyceraldehyde 3-phosphate: step 4/5. In terms of biological role, catalyzes the reversible conversion of 2-phosphoglycerate (2-PG) into phosphoenolpyruvate (PEP). It is essential for the degradation of carbohydrates via glycolysis. The protein is Enolase of Kineococcus radiotolerans (strain ATCC BAA-149 / DSM 14245 / SRS30216).